A 223-amino-acid polypeptide reads, in one-letter code: Ribonuclease T (223 aa).

Residues 1–11 (MSDDHFDDEQE) show a composition bias toward acidic residues. Residues 1–21 (MSDDHFDDEQEGSSGGPRHPM) form a disordered region. The 175-residue stretch at 31–205 (VVVDVETGGF…YDTEKTAELF (175 aa)) folds into the Exonuclease domain. Mg(2+) contacts are provided by Asp34, Glu36, His192, and Asp197. Catalysis depends on His192, which acts as the Proton donor/acceptor.

Belongs to the RNase T family. Homodimer. Mg(2+) is required as a cofactor.

Trims short 3' overhangs of a variety of RNA species, leaving a one or two nucleotide 3' overhang. Responsible for the end-turnover of tRNA: specifically removes the terminal AMP residue from uncharged tRNA (tRNA-C-C-A). Also appears to be involved in tRNA biosynthesis. The protein is Ribonuclease T of Pseudomonas fluorescens (strain ATCC BAA-477 / NRRL B-23932 / Pf-5).